The primary structure comprises 1181 residues: Lysine-specific demethylase hairless (1181 aa).

Over residues 311-323 the composition is skewed to pro residues; the sequence is TPRCPSPGPPTPP. Disordered stretches follow at residues 311-378, 413-472, and 509-543; these read TPRC…HTKL, AGSP…DGRI, and SHSQKSHKLPLEEKPLEEDSCATSEEGGGSSPEAS. The span at 347–357 shows a compositional bias: low complexity; the sequence is SPEGSSSGPGE. Positions 447 to 461 are enriched in polar residues; sequence TPETSTGSKAEAQQQ. The segment covering 462 to 472 has biased composition (basic and acidic residues); the sequence is EEQRGPRDGRI. Residues 560-564 carry the LXXLL motif 1 motif; sequence LCRLL. The C6-type zinc finger occupies 594–619; sequence CSRCHHGLFNTHWRCSHCSHRLCVAC. A disordered region spans residues 696–745; sequence GDGGQQKEPTEKTPPAPQLSCNGDSNRTKDIKEETPDSTESPAEDRAGRS. Positions 721–730 are enriched in basic and acidic residues; it reads NRTKDIKEET. An LXXLL motif 2 motif is present at residues 752–756; the sequence is LCELL. Positions 938 to 1149 constitute a JmjC domain; the sequence is DESRVENLAS…LSAQLCHQGA (212 aa). Residues Cys999, Glu1001, and His1117 each coordinate Fe cation.

Fe(2+) is required as a cofactor.

It is found in the nucleus. It carries out the reaction N(6),N(6)-dimethyl-L-lysyl(9)-[histone H3] + 2 2-oxoglutarate + 2 O2 = L-lysyl(9)-[histone H3] + 2 formaldehyde + 2 succinate + 2 CO2. In terms of biological role, histone demethylase that specifically demethylates both mono- and dimethylated 'Lys-9' of histone H3. May act as a transcription regulator controlling hair biology (via targeting of collagens), neural activity, and cell cycle. The protein is Lysine-specific demethylase hairless (Hr) of Rattus norvegicus (Rat).